Here is a 513-residue protein sequence, read N- to C-terminus: ATP synthase subunit alpha (513 aa).

169 to 176 (GDRQIGKT) serves as a coordination point for ATP.

Belongs to the ATPase alpha/beta chains family. As to quaternary structure, F-type ATPases have 2 components, CF(1) - the catalytic core - and CF(0) - the membrane proton channel. CF(1) has five subunits: alpha(3), beta(3), gamma(1), delta(1), epsilon(1). CF(0) has three main subunits: a(1), b(2) and c(9-12). The alpha and beta chains form an alternating ring which encloses part of the gamma chain. CF(1) is attached to CF(0) by a central stalk formed by the gamma and epsilon chains, while a peripheral stalk is formed by the delta and b chains.

It localises to the cell inner membrane. The enzyme catalyses ATP + H2O + 4 H(+)(in) = ADP + phosphate + 5 H(+)(out). Its function is as follows. Produces ATP from ADP in the presence of a proton gradient across the membrane. The alpha chain is a regulatory subunit. The polypeptide is ATP synthase subunit alpha (Francisella philomiragia subsp. philomiragia (strain ATCC 25017 / CCUG 19701 / FSC 153 / O#319-036)).